A 274-amino-acid polypeptide reads, in one-letter code: 2-dehydro-3-deoxyphosphooctonate aldolase (274 aa).

Belongs to the KdsA family.

The protein resides in the cytoplasm. It carries out the reaction D-arabinose 5-phosphate + phosphoenolpyruvate + H2O = 3-deoxy-alpha-D-manno-2-octulosonate-8-phosphate + phosphate. It participates in carbohydrate biosynthesis; 3-deoxy-D-manno-octulosonate biosynthesis; 3-deoxy-D-manno-octulosonate from D-ribulose 5-phosphate: step 2/3. Its pathway is bacterial outer membrane biogenesis; lipopolysaccharide biosynthesis. The chain is 2-dehydro-3-deoxyphosphooctonate aldolase from Rickettsia felis (strain ATCC VR-1525 / URRWXCal2) (Rickettsia azadi).